The following is a 305-amino-acid chain: tRNA dimethylallyltransferase (305 aa).

11–18 contributes to the ATP binding site; it reads GPTAVGKT. 13-18 contacts substrate; sequence TAVGKT. The interaction with substrate tRNA stretch occupies residues 36 to 39; the sequence is DSMQ.

Belongs to the IPP transferase family. Monomer. The cofactor is Mg(2+).

The enzyme catalyses adenosine(37) in tRNA + dimethylallyl diphosphate = N(6)-dimethylallyladenosine(37) in tRNA + diphosphate. Its function is as follows. Catalyzes the transfer of a dimethylallyl group onto the adenine at position 37 in tRNAs that read codons beginning with uridine, leading to the formation of N6-(dimethylallyl)adenosine (i(6)A). This chain is tRNA dimethylallyltransferase, found in Listeria monocytogenes serotype 4a (strain HCC23).